Here is a 548-residue protein sequence, read N- to C-terminus: Cilia- and flagella-associated protein 97 (548 aa).

Phosphoserine is present on residues Ser8 and Ser19. Disordered stretches follow at residues 85–297 (NYLT…RQEN), 407–431 (LSRQ…PPKL), and 497–548 (YSPL…LRSH). The segment covering 91-107 (GNERKPKFPSKEQHVEN) has biased composition (basic and acidic residues). Over residues 112 to 121 (TRSPSLLTSS) the composition is skewed to low complexity. Residues 152 to 161 (DYYTDGEESS) show a composition bias toward acidic residues. Thr155 carries the phosphothreonine modification. Residues Ser160 and Ser161 each carry the phosphoserine modification. Positions 191 to 209 (KASSSSLSSSSSRSSSDCS) are enriched in low complexity. Positions 214–237 (DMQNKPDSGSSGKRVSSVTPSSPK) are enriched in polar residues. Residue Ser235 is modified to Phosphoserine. Over residues 238-248 (QKCKSGRKSSA) the composition is skewed to basic residues. At Ser259 the chain carries Phosphoserine. Positions 264–289 (TDVTPASTPDSSPAQPFELSQSQNQK) are enriched in polar residues. A coiled-coil region spans residues 383–460 (RKNYSFTREE…ALLKRLEAVK (78 aa)). Polar residues-rich tracts occupy residues 504–514 (SRTSSATSGLS) and 537–548 (IQCSNSKVLRSH).

Belongs to the CFAP97 family.

This Rattus norvegicus (Rat) protein is Cilia- and flagella-associated protein 97.